A 311-amino-acid polypeptide reads, in one-letter code: Transcription factor BIM2 (311 aa).

Disordered regions lie at residues 1 to 60 (MRTG…RRSK) and 271 to 311 (ANQG…MKTL). Basic and acidic residues-rich tracts occupy residues 33 to 44 (SNRDSKENDKAS) and 51 to 60 (SVTEQRRRSK). The bHLH domain occupies 45–95 (AIRSKHSVTEQRRRSKINERFQILRELIPNSEQKRDTASFLLEVIDYVQYL).

Homodimer. Interacts with the N-terminus of BZR2/BES1. Expressed constitutively in roots, leaves, stems, and flowers.

It is found in the nucleus. Positive brassinosteroid-signaling protein. This chain is Transcription factor BIM2 (BIM2), found in Arabidopsis thaliana (Mouse-ear cress).